The sequence spans 386 residues: Succinate--CoA ligase [ADP-forming] subunit beta (386 aa).

The ATP-grasp domain maps to 9–243 (KQLFRKYSIP…PAEDDPAEAE (235 aa)). Residues lysine 45, 52–54 (GRG), glutamate 98, valine 101, and glutamate 106 each bind ATP. Asparagine 198 and aspartate 212 together coordinate Mg(2+). Residues asparagine 263 and 320 to 322 (GIL) contribute to the substrate site.

The protein belongs to the succinate/malate CoA ligase beta subunit family. In terms of assembly, heterotetramer of two alpha and two beta subunits. It depends on Mg(2+) as a cofactor.

It carries out the reaction succinate + ATP + CoA = succinyl-CoA + ADP + phosphate. The catalysed reaction is GTP + succinate + CoA = succinyl-CoA + GDP + phosphate. Its pathway is carbohydrate metabolism; tricarboxylic acid cycle; succinate from succinyl-CoA (ligase route): step 1/1. Its function is as follows. Succinyl-CoA synthetase functions in the citric acid cycle (TCA), coupling the hydrolysis of succinyl-CoA to the synthesis of either ATP or GTP and thus represents the only step of substrate-level phosphorylation in the TCA. The beta subunit provides nucleotide specificity of the enzyme and binds the substrate succinate, while the binding sites for coenzyme A and phosphate are found in the alpha subunit. The sequence is that of Succinate--CoA ligase [ADP-forming] subunit beta from Desulfotalea psychrophila (strain LSv54 / DSM 12343).